We begin with the raw amino-acid sequence, 159 residues long: Cyclic pyranopterin monophosphate synthase (159 aa).

Substrate contacts are provided by residues 76–78 (LCH) and 114–115 (ME). Asp129 is a catalytic residue.

The protein belongs to the MoaC family. In terms of assembly, homohexamer; trimer of dimers.

The catalysed reaction is (8S)-3',8-cyclo-7,8-dihydroguanosine 5'-triphosphate = cyclic pyranopterin phosphate + diphosphate. Its pathway is cofactor biosynthesis; molybdopterin biosynthesis. Its function is as follows. Catalyzes the conversion of (8S)-3',8-cyclo-7,8-dihydroguanosine 5'-triphosphate to cyclic pyranopterin monophosphate (cPMP). The polypeptide is Cyclic pyranopterin monophosphate synthase (Oleidesulfovibrio alaskensis (strain ATCC BAA-1058 / DSM 17464 / G20) (Desulfovibrio alaskensis)).